Consider the following 279-residue polypeptide: Dermonecrotic toxin StSicTox-betaIB1i (279 aa).

Residue H12 is part of the active site. Mg(2+)-binding residues include E32 and D34. Residue H48 is the Nucleophile of the active site. Disulfide bonds link C52-C58 and C54-C198. D92 provides a ligand contact to Mg(2+).

This sequence belongs to the arthropod phospholipase D family. Class II subfamily. Class IIb sub-subfamily. Mg(2+) is required as a cofactor. Expressed by the venom gland.

The protein resides in the secreted. It catalyses the reaction an N-(acyl)-sphingosylphosphocholine = an N-(acyl)-sphingosyl-1,3-cyclic phosphate + choline. The catalysed reaction is N-hexanoyl-sphing-4-enine-1-phosphocholine = N-(hexanoyl)-sphing-4-enine-1,3-cyclic phosphate + choline. The enzyme catalyses an N-(acyl)-sphingosylphosphoethanolamine = an N-(acyl)-sphingosyl-1,3-cyclic phosphate + ethanolamine. It carries out the reaction N-dodecanoyl-heptadecasphing-4-enine-1-phosphoethanolamine = N-dodecanoyl-heptadecasphing-4-enine-1,3-cyclic phosphate + ethanolamine. It catalyses the reaction a 1-acyl-sn-glycero-3-phosphoethanolamine = a 1-acyl-sn-glycero-2,3-cyclic phosphate + ethanolamine. The catalysed reaction is 1-tetradecanoyl-sn-glycero-3-phosphoethanolamine = 1-tetradecanoyl-sn-glycero-2,3-cyclic phosphate + ethanolamine. In terms of biological role, dermonecrotic toxins cleave the phosphodiester linkage between the phosphate and headgroup of certain phospholipids (sphingolipid and lysolipid substrates), forming an alcohol (often choline) and a cyclic phosphate. This toxin acts on lysophosphatidylethanolamine (LPE) and ceramide phosphoethanolamine (CPE) with high activity. This toxin acts on sphingomyelin (SM) with very low activity and is not active on lysophosphatidylserine (LPS), lysophosphatidylcholine (LPC) and lysophosphatidylglycerol (LPG). It acts by transphosphatidylation, releasing exclusively cyclic phosphate as second products. It is not surprising that spider toxins have affinity for ethanolamine-containing sphingolipids since they are common in insect prey. Induces dermonecrosis, hemolysis, increased vascular permeability, edema, inflammatory response, and platelet aggregation. The polypeptide is Dermonecrotic toxin StSicTox-betaIB1i (Sicarius terrosus (Cave spider)).